We begin with the raw amino-acid sequence, 321 residues long: Carnitine monooxygenase reductase subunit (321 aa).

One can recognise an FAD-binding FR-type domain in the interval 4 to 109 (YQMFEVQVSQ…STPNNLFALI (106 aa)). Residues 233–321 (DAFTLVLARS…AKGKRLVLDL (89 aa)) form the 2Fe-2S ferredoxin-type domain. Cysteine 270, cysteine 275, cysteine 278, and cysteine 308 together coordinate [2Fe-2S] cluster.

It belongs to the PDR/VanB family. CntB subfamily. Composed of an oxygenase subunit (yeaW) and a reductase subunit (yeaX). It depends on FMN as a cofactor. The cofactor is [2Fe-2S] cluster.

It catalyses the reaction (R)-carnitine + NADH + O2 + H(+) = (3R)-3-hydroxy-4-oxobutanoate + trimethylamine + NAD(+) + H2O. The catalysed reaction is (R)-carnitine + NADPH + O2 + H(+) = (3R)-3-hydroxy-4-oxobutanoate + trimethylamine + NADP(+) + H2O. It functions in the pathway amine and polyamine metabolism; carnitine metabolism. In terms of biological role, converts carnitine to trimethylamine and malic semialdehyde. Can also use gamma-butyrobetaine, choline and betaine as substrates. In Escherichia coli (strain K12), this protein is Carnitine monooxygenase reductase subunit (yeaX).